Consider the following 291-residue polypeptide: Protease HtpX homolog (291 aa).

2 helical membrane passes run 11–31 and 34–54; these read INTF…GLLA and FLGM…ACVQ. Histidine 140 serves as a coordination point for Zn(2+). Glutamate 141 is an active-site residue. Histidine 144 contributes to the Zn(2+) binding site. Helical transmembrane passes span 155 to 175 and 186 to 206; these read IVFG…RALI and AFSF…AMLV. Glutamate 215 serves as a coordination point for Zn(2+).

Belongs to the peptidase M48B family. It depends on Zn(2+) as a cofactor.

It localises to the cell membrane. The sequence is that of Protease HtpX homolog from Tropheryma whipplei (strain Twist) (Whipple's bacillus).